The chain runs to 345 residues: L-threonine 3-dehydrogenase (345 aa).

Cys39 serves as a coordination point for Zn(2+). Active-site charge relay system residues include Thr41 and His44. Residues His64, Glu65, Cys94, Cys97, Cys100, and Cys108 each coordinate Zn(2+). NAD(+) is bound by residues Ile176, Asp196, Arg201, 263-265 (LGI), and 287-288 (VY).

The protein belongs to the zinc-containing alcohol dehydrogenase family. In terms of assembly, homotetramer. The cofactor is Zn(2+).

The protein resides in the cytoplasm. It carries out the reaction L-threonine + NAD(+) = (2S)-2-amino-3-oxobutanoate + NADH + H(+). It functions in the pathway amino-acid degradation; L-threonine degradation via oxydo-reductase pathway; glycine from L-threonine: step 1/2. Functionally, catalyzes the NAD(+)-dependent oxidation of L-threonine to 2-amino-3-ketobutyrate. This chain is L-threonine 3-dehydrogenase, found in Anaeromyxobacter sp. (strain K).